The chain runs to 185 residues: Large ribosomal subunit protein uL22 (185 aa).

The protein belongs to the universal ribosomal protein uL22 family. Component of the large ribosomal subunit. Mature ribosomes consist of a small (40S) and a large (60S) subunit. The 40S subunit contains about 32 different proteins and 1 molecule of RNA (18S). The 60S subunit contains 45 different proteins and 3 molecules of RNA (25S, 5.8S and 5S).

The protein localises to the cytoplasm. Functionally, component of the ribosome, a large ribonucleoprotein complex responsible for the synthesis of proteins in the cell. The small ribosomal subunit (SSU) binds messenger RNAs (mRNAs) and translates the encoded message by selecting cognate aminoacyl-transfer RNA (tRNA) molecules. The large subunit (LSU) contains the ribosomal catalytic site termed the peptidyl transferase center (PTC), which catalyzes the formation of peptide bonds, thereby polymerizing the amino acids delivered by tRNAs into a polypeptide chain. The nascent polypeptides leave the ribosome through a tunnel in the LSU and interact with protein factors that function in enzymatic processing, targeting, and the membrane insertion of nascent chains at the exit of the ribosomal tunnel. The polypeptide is Large ribosomal subunit protein uL22 (Candida albicans (strain SC5314 / ATCC MYA-2876) (Yeast)).